A 128-amino-acid chain; its full sequence is Small ribosomal subunit protein uS9c (128 aa).

The segment at 106–128 is disordered; it reads SRIKERKKYGLKKARKAPQFSKR. Residues 109–128 show a composition bias toward basic residues; sequence KERKKYGLKKARKAPQFSKR.

Belongs to the universal ribosomal protein uS9 family.

Its subcellular location is the plastid. The protein localises to the chloroplast. This is Small ribosomal subunit protein uS9c (rps9) from Cyanidium caldarium (Red alga).